A 373-amino-acid chain; its full sequence is Opsin Rh1 (373 aa).

Topologically, residues 1-49 (MESFAVAAAQLGPHFAPLSNGSVVDKVTPDMAHLISPYWNQFPAMDPIW) are extracellular. N20 carries an N-linked (GlcNAc...) asparagine glycan. Residues 50–74 (AKILTAYMIMIGMISWCGNGVVIYI) form a helical membrane-spanning segment. The Cytoplasmic segment spans residues 75 to 86 (FATTKSLRTPAN). Residues 87–112 (LLVINLAISDFGIMITNTPMMGINLY) form a helical membrane-spanning segment. Topologically, residues 113-126 (FETWVLGPMMCDIY) are extracellular. Cysteines 123 and 200 form a disulfide. A helical transmembrane segment spans residues 127 to 146 (AGLGSAFGCSSIWSMCMISL). The Cytoplasmic segment spans residues 147–165 (DRYQVIVKGMAGRPMTIPL). A helical membrane pass occupies residues 166–189 (ALGKIAYIWFMSSIWCLAPAFGWS). Over 190 to 213 (RYVPEGNLTSCGIDYLERDWNPRS) the chain is Extracellular. N-linked (GlcNAc...) asparagine glycosylation occurs at N196. A helical transmembrane segment spans residues 214 to 241 (YLIFYSIFVYYIPLFLICYSYWFIIAAV). At 242–276 (SAHEKAMREQAKKMNVKSLRSSEDAEKSAEGKLAK) the chain is on the cytoplasmic side. A helical membrane pass occupies residues 277-300 (VALVTITLWFMAWTPYLVINCMGL). Over 301-307 (FKFEGLT) the chain is Extracellular. The helical transmembrane segment at 308 to 332 (PLNTIWGACFAKSAACYNPIVYGIS) threads the bilayer. Position 319 is an N6-(retinylidene)lysine (K319). Over 333 to 373 (HPKYRLALKEKCPCCVFGKVDDGKSSDAQSQATASEAESKA) the chain is Cytoplasmic. The tract at residues 354–373 (DGKSSDAQSQATASEAESKA) is disordered. A compositionally biased stretch (low complexity) spans 358–373 (SDAQSQATASEAESKA).

This sequence belongs to the G-protein coupled receptor 1 family. Opsin subfamily. Phosphorylated on some or all of the serine and threonine residues present in the C-terminal region.

Its subcellular location is the cell projection. It is found in the rhabdomere membrane. In terms of biological role, visual pigments are the light-absorbing molecules that mediate vision. They consist of an apoprotein, opsin, covalently linked to cis-retinal. The polypeptide is Opsin Rh1 (ninaE) (Drosophila melanogaster (Fruit fly)).